A 145-amino-acid chain; its full sequence is Bacilliredoxin BrxB (145 aa).

Active-site nucleophile residues include cysteine 52 and cysteine 54. Cysteine 52 is modified (S-bacillithiol cysteine disulfide). The short motif at 52-54 is the CXC active site motif element; sequence CGC. The cysteines at positions 52 and 54 are disulfide-linked.

This sequence belongs to the bacilliredoxin family. In terms of assembly, interacts with BrxC. N-terminal Cys of the CXC active site motif can react with bacillithiol (BSH) to form mixed disulfides. S-bacillithiolation protects Cys residues against overoxidation by acting as a redox switch in response to oxidative stress.

S-bacillithiolation is the formation of mixed disulfide bonds between protein thiols and the general thiol reductant bacillithiol (BSH) under oxidative stress. BSH is an equivalent of glutathione (GSH) in Firmicutes. This protein is a dithiol bacilliredoxin, which debacillithiolates (removes BSH) the S-bacillithiolated OhrR (OhrR-SSB) in vitro and in vivo NaOCl-generated S-bacillithiolated MetE (MetE-SSB). Involved in maintaining redox homeostasis in response to disulfide stress conditions. In Bacillus subtilis (strain 168), this protein is Bacilliredoxin BrxB.